The sequence spans 508 residues: Glucose-1-phosphate adenylyltransferase small subunit 1, chloroplastic (508 aa).

The disordered stretch occupies residues M1–S27. Residues M1 to A59 constitute a chloroplast transit peptide. Residues S15–S27 show a composition bias toward low complexity.

This sequence belongs to the bacterial/plant glucose-1-phosphate adenylyltransferase family. Heterotetramer. Seeds.

Its subcellular location is the plastid. It is found in the chloroplast. The enzyme catalyses alpha-D-glucose 1-phosphate + ATP + H(+) = ADP-alpha-D-glucose + diphosphate. The protein operates within glycan biosynthesis; starch biosynthesis. With respect to regulation, activated by 3'phosphoglycerate, inhibited by orthophosphate. Allosteric regulation. Its function is as follows. This protein plays a role in synthesis of starch. It catalyzes the synthesis of the activated glycosyl donor, ADP-glucose from Glc-1-P and ATP. In Vicia faba (Broad bean), this protein is Glucose-1-phosphate adenylyltransferase small subunit 1, chloroplastic (AGPC).